Here is a 102-residue protein sequence, read N- to C-terminus: Small ribosomal subunit protein uS10 (102 aa).

It belongs to the universal ribosomal protein uS10 family. Part of the 30S ribosomal subunit.

Functionally, involved in the binding of tRNA to the ribosomes. This is Small ribosomal subunit protein uS10 from Methanocorpusculum labreanum (strain ATCC 43576 / DSM 4855 / Z).